We begin with the raw amino-acid sequence, 291 residues long: Release factor glutamine methyltransferase (291 aa).

S-adenosyl-L-methionine-binding positions include 127-131 (GTGSG), Asp-150, Trp-179, and Asn-196. 196-199 (NPPY) contacts substrate.

This sequence belongs to the protein N5-glutamine methyltransferase family. PrmC subfamily.

It catalyses the reaction L-glutaminyl-[peptide chain release factor] + S-adenosyl-L-methionine = N(5)-methyl-L-glutaminyl-[peptide chain release factor] + S-adenosyl-L-homocysteine + H(+). In terms of biological role, methylates the class 1 translation termination release factors RF1/PrfA and RF2/PrfB on the glutamine residue of the universally conserved GGQ motif. This is Release factor glutamine methyltransferase from Thermosynechococcus vestitus (strain NIES-2133 / IAM M-273 / BP-1).